Consider the following 110-residue polypeptide: PCNA-associated factor (110 aa).

Lys-15 is covalently cross-linked (Glycyl lysine isopeptide (Lys-Gly) (interchain with G-Cter in ubiquitin)). Positions 23 to 34 match the D-box motif; it reads RKVLGSSTFVTN. Lys-24 carries the N6-acetyllysine; alternate modification. Residue Lys-24 forms a Glycyl lysine isopeptide (Lys-Gly) (interchain with G-Cter in ubiquitin); alternate linkage. Residues Ser-28 and Ser-71 each carry the phosphoserine modification. Residues 28–39 are compositionally biased toward low complexity; that stretch reads SSTFVTNSSSSS. The segment at 28 to 110 is disordered; the sequence is SSTFVTNSSS…QPDHRDDENE (83 aa). The short motif at 61–71 is the PIP-box element; sequence QKGIGEFFRLS. The segment covering 71–80 has biased composition (basic and acidic residues); the sequence is SPKESKKENQ. A KEN box motif is present at residues 77 to 79; that stretch reads KEN. Residues 84–96 carry the Initiation motif motif; it reads EAGTSGLGKAKRK.

As to quaternary structure, interacts (when monoubiquitinated at Lys-15 and Lys-24) with PCNA. Interacts with isoform 2/p33ING1b of ING1. Interacts with BRCA1. Post-translationally, monoubiquitinated at Lys-15 and Lys-24 during normal S phase, promoting its association with PCNA. Also diubiquitinated at these 2 sites. Following DNA damage, monoubiquitin chains at Lys-15 and Lys-24 are probably extended, leading to disrupt the interaction with PCNA. Polyubiquitinated by the APC/C complex at the mitotic exit, leading to its degradation by the proteasome.

Its subcellular location is the nucleus. It localises to the cytoplasm. The protein resides in the perinuclear region. Functionally, PCNA-binding protein that acts as a regulator of DNA repair during DNA replication. Following DNA damage, the interaction with PCNA is disrupted, facilitating the interaction between monoubiquitinated PCNA and the translesion DNA synthesis DNA polymerase eta (POLH) at stalled replisomes, facilitating the bypass of replication-fork-blocking lesions. Also acts as a regulator of centrosome number. The chain is PCNA-associated factor from Mus musculus (Mouse).